Here is a 707-residue protein sequence, read N- to C-terminus: Solute carrier family 15 member 1 (707 aa).

The helical transmembrane segment at methionine 1–valine 21 threads the bilayer. The Extracellular segment spans residues asparagine 22–threonine 53. N-linked (GlcNAc...) asparagine glycosylation occurs at asparagine 50. Residues valine 54–alanine 74 form a helical membrane-spanning segment. Residues aspartate 75–lysine 82 are Cytoplasmic-facing. A helical membrane pass occupies residues threonine 83–valine 103. Residues asparagine 104–leucine 118 lie on the Extracellular side of the membrane. Residues proline 119 to isoleucine 139 traverse the membrane as a helical segment. Topologically, residues lysine 140–arginine 161 are cytoplasmic. A helical transmembrane segment spans residues phenylalanine 162–proline 182. Over methionine 183–tyrosine 198 the chain is Extracellular. The chain crosses the membrane as a helical span at residues proline 199–glycine 219. Residues serine 220 to glutamine 276 are Cytoplasmic-facing. A helical membrane pass occupies residues isoleucine 277 to phenylalanine 297. Over aspartate 298–threonine 327 the chain is Extracellular. Residues valine 328–isoleucine 348 form a helical membrane-spanning segment. At alanine 349–methionine 361 the chain is on the cytoplasmic side. A helical membrane pass occupies residues threonine 362–isoleucine 382. At aspartate 383–glutamine 583 the chain is on the extracellular side. The tract at residues aspartate 383 to glutamine 583 is extracellular domain (ECD). N-linked (GlcNAc...) asparagine glycans are attached at residues asparagine 439, asparagine 498, and asparagine 513. The helical transmembrane segment at isoleucine 584–phenylalanine 604 threads the bilayer. Over serine 605–glutamine 618 the chain is Cytoplasmic. Residues alanine 619–glycine 639 form a helical membrane-spanning segment. At glutamine 640–glutamine 644 the chain is on the extracellular side. Residues tryptophan 645–methionine 665 traverse the membrane as a helical segment. The Cytoplasmic segment spans residues alanine 666 to methionine 707. Residues glutamate 682–methionine 707 form a disordered region. The segment covering aspartate 684 to aspartate 694 has biased composition (basic and acidic residues).

It belongs to the major facilitator superfamily. Proton-dependent oligopeptide transporter (POT/PTR) (TC 2.A.17) family. In terms of assembly, interacts (via extracellular domain region) with trypsin. As to expression, intestine, kidney, liver and low in brain.

It localises to the apical cell membrane. The catalysed reaction is a dipeptide(out) + H(+)(out) = a dipeptide(in) + H(+)(in). The enzyme catalyses an L-amino acid tripeptide(out) + H(+)(out) = an L-amino acid tripeptide(in) + H(+)(in). It catalyses the reaction L-alanyl-L-lysine(out) + H(+)(out) = L-alanyl-L-lysine(in) + H(+)(in). It carries out the reaction L-alanyl-L-proline(out) + H(+)(out) = L-alanyl-L-proline(in) + H(+)(in). The catalysed reaction is L-alanyl-L-valine(out) + H(+)(out) = L-alanyl-L-valine(in) + H(+)(in). The enzyme catalyses carnosine(out) + H(+)(out) = carnosine(in) + H(+)(in). It catalyses the reaction glycyl-L-glutamine(out) + H(+)(out) = glycyl-L-glutamine(in) + H(+)(in). It carries out the reaction glycyl-L-leucine(out) + H(+)(out) = glycyl-L-leucine(in) + H(+)(in). The catalysed reaction is glycyl-L-proline(out) + H(+)(out) = glycyl-L-proline(in) + H(+)(in). The enzyme catalyses glycyl-sarcosine(out) + H(+)(out) = glycyl-sarcosine(in) + H(+)(in). It catalyses the reaction L-leucyl-L-leucine(out) + H(+)(out) = L-leucyl-L-leucine(in) + H(+)(in). It carries out the reaction L-leucyl-L-proline(out) + H(+)(out) = L-leucyl-L-proline(in) + H(+)(in). The catalysed reaction is L-phenylalanyl-L-leucine(out) + H(+)(out) = L-phenylalanyl-L-leucine(in) + H(+)(in). The enzyme catalyses L-phenylalanyl-L-phenylalanine(out) + H(+)(out) = L-phenylalanyl-L-phenylalanine(in) + H(+)(in). It catalyses the reaction L-lysyl-glycine(out) + H(+)(out) = L-lysyl-glycine(in) + H(+)(in). It carries out the reaction L-tyrosylglycine(out) + H(+)(out) = L-tyrosylglycine(in) + H(+)(in). The catalysed reaction is L-alanyl-L-aspartate(out) + 2 H(+)(out) = L-alanyl-L-aspartate(in) + 2 H(+)(in). The enzyme catalyses L-aspartyl-glycine(out) + 2 H(+)(out) = L-aspartyl-glycine(in) + 2 H(+)(in). It catalyses the reaction glycyl-L-aspartate(out) + 2 H(+)(out) = glycyl-L-aspartate(in) + 2 H(+)(in). It carries out the reaction glycyl-L-glutamate(out) + 2 H(+)(out) = glycyl-L-glutamate(in) + 2 H(+)(in). The catalysed reaction is L-alanyl-L-leucyl-L-alanine(out) + H(+)(out) = L-alanyl-L-leucyl-L-alanine(in) + H(+)(in). The enzyme catalyses L-alanyl-L-prolylglycine(out) + H(+)(out) = L-alanyl-L-prolylglycine(in) + H(+)(in). It catalyses the reaction glycylglycyl-L-isoleucine(out) + H(+)(out) = glycylglycyl-L-isoleucine(in) + H(+)(in). It carries out the reaction glycylglycyl-L-proline(out) + H(+)(out) = glycylglycyl-L-proline(in) + H(+)(in). The catalysed reaction is L-methionyl-L-phenylalanyl-L-methionine(out) + H(+)(out) = L-methionyl-L-phenylalanyl-L-methionine(in) + H(+)(in). The enzyme catalyses N-acetyl-D-muramoyl-L-alanyl-D-isoglutamine(out) + 2 H(+)(out) = N-acetyl-D-muramoyl-L-alanyl-D-isoglutamine(in) + 2 H(+)(in). It catalyses the reaction N(alpha)-formyl-L-methionyl-L-leucyl-L-phenylalanine(out) + 2 H(+)(out) = N(alpha)-formyl-L-methionyl-L-leucyl-L-phenylalanine(in) + 2 H(+)(in). Its function is as follows. Electrogenic proton-coupled amino-acid transporter that transports oligopeptides of 2 to 4 amino acids with a preference for dipeptides. Transports neutral and monovalently charged peptides with a proton to peptide stoichiometry of 1:1 or 2:1. Primarily responsible for the absorption of dietary di- and tripeptides from the small intestinal lumen. Mediates transepithelial transport of muramyl and N-formylated bacterial dipeptides contributing to recognition of pathogenic bacteria by the mucosal immune system. The polypeptide is Solute carrier family 15 member 1 (SLC15A1) (Oryctolagus cuniculus (Rabbit)).